Reading from the N-terminus, the 473-residue chain is Mitochondrial adenyl nucleotide antiporter SLC25A24-A (473 aa).

Residues 1–173 (MLEQVQKFLL…RFWKHSTVLD (173 aa)) are regulatory N-terminal domain. Residues 1–197 (MLEQVQKFLL…EKKTGQWWKH (197 aa)) lie on the Mitochondrial intermembrane side of the membrane. 4 EF-hand domains span residues 19–54 (DSHTRYAELFHKLDVNKDGKVDILELQEGLKAMGMA), 55–88 (VGKGAEEKIVEAGDTNKDGHLDFGEFMRYLEEHE), 86–121 (EHEKKMKIAFTSLDKNKDGKIESSEVMNSLKTLGIN), and 122–157 (ISLDHAEKILKSMDSDGTLTVDWNEWRDHFLFNPAD). 20 residues coordinate Ca(2+): aspartate 32, asparagine 34, aspartate 36, lysine 38, glutamate 43, aspartate 68, asparagine 70, aspartate 72, histidine 74, glutamate 79, aspartate 99, asparagine 101, aspartate 103, lysine 105, glutamate 110, aspartate 135, aspartate 137, threonine 139, threonine 141, and glutamate 146. A linker region region spans residues 159-168 (IQQIIRFWKH). Residues 174-473 (IGDSLTIPDE…YEKMKIQLGI (300 aa)) are C-terminal transmembrane transporter domain. Solcar repeat units follow at residues 192–277 (GQWW…YKKL), 285–370 (LGTA…LKNY), and 382–470 (PGVL…MKIQ). Residues 198–215 (LLAGGMAGAVSRTGTAPL) form a helical membrane-spanning segment. The Mitochondrial matrix portion of the chain corresponds to 216–251 (DRLKVMMQVHGTKGNSNIITGLKQMVKEGGVRSLWR). The chain crosses the membrane as a helical span at residues 252 to 271 (GNGVNVIKIAPETAMKFWAY). Over 272-294 (EQYKKLFTSESGKLGTAERFIAG) the chain is Mitochondrial intermembrane. The chain crosses the membrane as a helical span at residues 295 to 308 (SLAGATAQTSIYPM). Residues 309–344 (EVLKTRLAVGKTGQYSGMFDCAKKIMQKEGILAFYK) lie on the Mitochondrial matrix side of the membrane. A helical transmembrane segment spans residues 345–364 (GYIPNILGIIPYAGIDLAIY). Residues 365 to 387 (ETLKNYWLQNYAKDSANPGVLVL) are Mitochondrial intermembrane-facing. Residues 388 to 405 (LGCGTVSSTCGQLASYPL) traverse the membrane as a helical segment. Over 406-444 (ALIRTRMQAQASIEGAPQLNMGGLFRKIVAKEGFFGLYT) the chain is Mitochondrial matrix. A helical membrane pass occupies residues 445–464 (GIAPNFLKVLPAVSISYVVY). Topologically, residues 465–473 (EKMKIQLGI) are mitochondrial intermembrane.

The protein belongs to the mitochondrial carrier (TC 2.A.29) family. In terms of assembly, monomer.

It is found in the mitochondrion inner membrane. The enzyme catalyses Mg(2+)(out) + phosphate(in) + ATP(out) = Mg(2+)(in) + phosphate(out) + ATP(in). It carries out the reaction ADP(out) + phosphate(in) + H(+)(out) = ADP(in) + phosphate(out) + H(+)(in). The catalysed reaction is AMP(out) + phosphate(in) = AMP(in) + phosphate(out). It catalyses the reaction phosphate(in) + ATP(out) + 2 H(+)(out) = phosphate(out) + ATP(in) + 2 H(+)(in). The enzyme catalyses dADP(in) + ADP(out) = dADP(out) + ADP(in). It carries out the reaction Mg(2+)(in) + ADP(out) + ATP(in) + H(+)(out) = Mg(2+)(out) + ADP(in) + ATP(out) + H(+)(in). The catalysed reaction is ADP(out) + diphosphate(in) = ADP(in) + diphosphate(out). It catalyses the reaction dAMP(in) + ADP(out) + H(+)(out) = dAMP(out) + ADP(in) + H(+)(in). The enzyme catalyses 3'-AMP(in) + ADP(out) + H(+)(out) = 3'-AMP(out) + ADP(in) + H(+)(in). It carries out the reaction dAMP(out) + phosphate(in) = dAMP(in) + phosphate(out). The catalysed reaction is 3'-AMP(out) + phosphate(in) = 3'-AMP(in) + phosphate(out). It catalyses the reaction dADP(out) + phosphate(in) + H(+)(out) = dADP(in) + phosphate(out) + H(+)(in). Its activity is regulated as follows. Activated by an increase in cytosolic calcium levels that induce a conformational change of the N-terminal regulatory domain, uncapping the channel and allowing transport. Inhibited by bathophenanthroline, mersalyl, p-hydroxymercuribenzoate, bromcresol purple and tannic acid. Functionally, electroneutral antiporter that mediates the transport of adenyl nucleotides through the inner mitochondrial membrane. Originally identified as an ATP-magnesium/inorganic phosphate antiporter, it also acts as a broad specificity adenyl nucleotide antiporter. By regulating the mitochondrial matrix adenyl nucleotide pool could adapt to changing cellular energetic demands and indirectly regulate adenyl nucleotide-dependent metabolic pathways. The protein is Mitochondrial adenyl nucleotide antiporter SLC25A24-A (slc25a24-a) of Xenopus laevis (African clawed frog).